Consider the following 161-residue polypeptide: S-ribosylhomocysteine lyase (161 aa).

The Fe cation site is built by H58, H62, and C128.

This sequence belongs to the LuxS family. As to quaternary structure, homodimer. Requires Fe cation as cofactor.

It carries out the reaction S-(5-deoxy-D-ribos-5-yl)-L-homocysteine = (S)-4,5-dihydroxypentane-2,3-dione + L-homocysteine. In terms of biological role, involved in the synthesis of autoinducer 2 (AI-2) which is secreted by bacteria and is used to communicate both the cell density and the metabolic potential of the environment. The regulation of gene expression in response to changes in cell density is called quorum sensing. Catalyzes the transformation of S-ribosylhomocysteine (RHC) to homocysteine (HC) and 4,5-dihydroxy-2,3-pentadione (DPD). This is S-ribosylhomocysteine lyase from Bifidobacterium adolescentis (strain ATCC 15703 / DSM 20083 / NCTC 11814 / E194a).